We begin with the raw amino-acid sequence, 135 residues long: Ribonuclease P protein component (135 aa).

It belongs to the RnpA family. In terms of assembly, consists of a catalytic RNA component (M1 or rnpB) and a protein subunit.

It catalyses the reaction Endonucleolytic cleavage of RNA, removing 5'-extranucleotides from tRNA precursor.. In terms of biological role, RNaseP catalyzes the removal of the 5'-leader sequence from pre-tRNA to produce the mature 5'-terminus. It can also cleave other RNA substrates such as 4.5S RNA. The protein component plays an auxiliary but essential role in vivo by binding to the 5'-leader sequence and broadening the substrate specificity of the ribozyme. In Saccharophagus degradans (strain 2-40 / ATCC 43961 / DSM 17024), this protein is Ribonuclease P protein component.